The chain runs to 234 residues: Sperm flagellar protein 1 (234 aa).

Residues 7-112 (EEALHQLYLW…VLIPLRQRLE (106 aa)) form the Calponin-homology (CH) domain. Positions 181–234 (VLQIAEKEQELLASQETVQVLQMKVKRLEHLLQLKNVRIDDLSRRLQQAERKQR) are essential for homodimerization and microtubule bundling activity.

As to quaternary structure, homodimer. Interacts with actin, TJP1, CGN and CDH1. Expressed predominantly in the seminiferous epithelium of adult testis. Expressed in pillar cells of the organ of Corti (at protein level). Expressed in brain, kidney, lung and testis. Highly expressed in the trachea, lung and oviduct.

The protein resides in the cytoplasm. The protein localises to the cell projection. It is found in the cilium. It localises to the flagellum. Its subcellular location is the cytoskeleton. The protein resides in the cilium axoneme. The protein localises to the apical cell membrane. It is found in the basolateral cell membrane. It localises to the stress fiber. Its subcellular location is the microvillus. The protein resides in the lamellipodium. The protein localises to the filopodium. Functionally, microtubule-associated protein that promotes microtubule bundling and stabilizes microtubules against depolymerization in response to cold shock. Microtubule-associated protein involved in the stabilization of microtubules along the axis of migration during radial intercalation. Promotes the establishment and stabilization of an axis of microtubules required for the active migration of cells into the outer epithelium. Essential for ciliary central apparatus formation which requires both its microtubule-binding and bundling activities and for ciliary localization of HYDIN and SPAG6 in ependymal cilia. Binds actin in intestinal epithelial cells (IECs), essential for IECs survival and contributes to formation of filopodia and lamellipodia in migrating IECs. Regulates planar cell polarity signaling pathway and asymmetric microtubule accumulation in ciliated epithelia. The protein is Sperm flagellar protein 1 (Spef1) of Mus musculus (Mouse).